A 230-amino-acid polypeptide reads, in one-letter code: Probable caffeoyl-CoA O-methyltransferase 1 (230 aa).

S-adenosyl-L-methionine contacts are provided by residues Thr52, Asp74, 76–77 (GV), Ser82, Asp100, Ala129, Asp151, Asp153, and Tyr160. Residue Asp151 coordinates a divalent metal cation. The a divalent metal cation site is built by Asp177 and Asn178.

It belongs to the class I-like SAM-binding methyltransferase superfamily. Cation-dependent O-methyltransferase family. CCoAMT subfamily.

The enzyme catalyses (E)-caffeoyl-CoA + S-adenosyl-L-methionine = (E)-feruloyl-CoA + S-adenosyl-L-homocysteine + H(+). The chain is Probable caffeoyl-CoA O-methyltransferase 1 (omt5) from Dictyostelium discoideum (Social amoeba).